A 278-amino-acid chain; its full sequence is TATA box-binding protein-associated factor RNA polymerase I subunit D (278 aa).

Disordered regions lie at residues 19-71 and 88-115; these read LANR…SSFE and KKRYKKKKKKRYQPTGRPRGRPEGRRNP. S23 bears the Phosphoserine mark. Basic residues-rich tracts occupy residues 43–53 and 88–99; these read REKRNPIRKFV and KKRYKKKKKKRY. Phosphoserine occurs at positions 138 and 234.

In terms of assembly, component of the transcription factor SL1/TIF-IB complex, composed of TBP and at least TAF1A, TAF1B, TAF1C and TAF1D. Interacts with UBTF.

It localises to the nucleus. Functionally, component of the transcription factor SL1/TIF-IB complex, which is involved in the assembly of the PIC (preinitiation complex) during RNA polymerase I-dependent transcription. The rate of PIC formation probably is primarily dependent on the rate of association of SL1/TIF-IB with the rDNA promoter. SL1/TIF-IB is involved in stabilization of nucleolar transcription factor 1/UBTF on rDNA. Formation of SL1/TIF-IB excludes the association of TBP with TFIID subunits. This Pongo abelii (Sumatran orangutan) protein is TATA box-binding protein-associated factor RNA polymerase I subunit D (TAF1D).